The chain runs to 264 residues: Thymidylate synthase (264 aa).

R21 serves as a coordination point for dUMP. A (6R)-5,10-methylene-5,6,7,8-tetrahydrofolate-binding site is contributed by H51. 126–127 (RR) contacts dUMP. The Nucleophile role is filled by C146. DUMP-binding positions include 166 to 169 (RSAD), N177, and 207 to 209 (HLY). D169 provides a ligand contact to (6R)-5,10-methylene-5,6,7,8-tetrahydrofolate. A (6R)-5,10-methylene-5,6,7,8-tetrahydrofolate-binding site is contributed by A263.

The protein belongs to the thymidylate synthase family. Bacterial-type ThyA subfamily. Homodimer.

The protein localises to the cytoplasm. The enzyme catalyses dUMP + (6R)-5,10-methylene-5,6,7,8-tetrahydrofolate = 7,8-dihydrofolate + dTMP. Its pathway is pyrimidine metabolism; dTTP biosynthesis. In terms of biological role, catalyzes the reductive methylation of 2'-deoxyuridine-5'-monophosphate (dUMP) to 2'-deoxythymidine-5'-monophosphate (dTMP) while utilizing 5,10-methylenetetrahydrofolate (mTHF) as the methyl donor and reductant in the reaction, yielding dihydrofolate (DHF) as a by-product. This enzymatic reaction provides an intracellular de novo source of dTMP, an essential precursor for DNA biosynthesis. The chain is Thymidylate synthase from Cytophaga hutchinsonii (strain ATCC 33406 / DSM 1761 / CIP 103989 / NBRC 15051 / NCIMB 9469 / D465).